The chain runs to 583 residues: Isocitrate dehydrogenase kinase/phosphatase (583 aa).

Residues 315–321 (APGIRGM) and K336 each bind ATP. The active site involves D371.

The protein belongs to the AceK family.

Its subcellular location is the cytoplasm. The catalysed reaction is L-seryl-[isocitrate dehydrogenase] + ATP = O-phospho-L-seryl-[isocitrate dehydrogenase] + ADP + H(+). Functionally, bifunctional enzyme which can phosphorylate or dephosphorylate isocitrate dehydrogenase (IDH) on a specific serine residue. This is a regulatory mechanism which enables bacteria to bypass the Krebs cycle via the glyoxylate shunt in response to the source of carbon. When bacteria are grown on glucose, IDH is fully active and unphosphorylated, but when grown on acetate or ethanol, the activity of IDH declines drastically concomitant with its phosphorylation. This chain is Isocitrate dehydrogenase kinase/phosphatase, found in Salmonella paratyphi B (strain ATCC BAA-1250 / SPB7).